We begin with the raw amino-acid sequence, 99 residues long: UPF0386 protein mll0189 (99 aa).

This sequence belongs to the UPF0386 family.

This Mesorhizobium japonicum (strain LMG 29417 / CECT 9101 / MAFF 303099) (Mesorhizobium loti (strain MAFF 303099)) protein is UPF0386 protein mll0189.